The chain runs to 323 residues: Methionyl-tRNA formyltransferase (323 aa).

117-120 serves as a coordination point for (6S)-5,6,7,8-tetrahydrofolate; it reads SLLP.

Belongs to the Fmt family.

The enzyme catalyses L-methionyl-tRNA(fMet) + (6R)-10-formyltetrahydrofolate = N-formyl-L-methionyl-tRNA(fMet) + (6S)-5,6,7,8-tetrahydrofolate + H(+). Its function is as follows. Attaches a formyl group to the free amino group of methionyl-tRNA(fMet). The formyl group appears to play a dual role in the initiator identity of N-formylmethionyl-tRNA by promoting its recognition by IF2 and preventing the misappropriation of this tRNA by the elongation apparatus. This chain is Methionyl-tRNA formyltransferase, found in Acidovorax ebreus (strain TPSY) (Diaphorobacter sp. (strain TPSY)).